A 200-amino-acid polypeptide reads, in one-letter code: Adenylate kinase (200 aa).

10–15 provides a ligand contact to ATP; the sequence is GAGKGT. Residues 30–59 are NMP; sequence STGDLFRANISQQTELGKLAKSYMDAGNLV. Residues Thr31, Arg36, 57 to 59, 84 to 87, and Gln91 each bind AMP; these read NLV and GFPR. An LID region spans residues 125–163; sequence GRRVCRNDSAHVFHVTYTPPKKEGVCDVCGGELYQRDDD. Residues Arg126 and 136-137 each bind ATP; that span reads VF. Positions 160 and 171 each coordinate AMP.

Belongs to the adenylate kinase family. As to quaternary structure, monomer.

Its subcellular location is the cytoplasm. The catalysed reaction is AMP + ATP = 2 ADP. The protein operates within purine metabolism; AMP biosynthesis via salvage pathway; AMP from ADP: step 1/1. Catalyzes the reversible transfer of the terminal phosphate group between ATP and AMP. Plays an important role in cellular energy homeostasis and in adenine nucleotide metabolism. The chain is Adenylate kinase from Streptomyces lividans.